A 284-amino-acid polypeptide reads, in one-letter code: Bifunctional protein FolD (284 aa).

Residues 164 to 166 (GTS) and Ile230 contribute to the NADP(+) site.

Belongs to the tetrahydrofolate dehydrogenase/cyclohydrolase family. Homodimer.

It catalyses the reaction (6R)-5,10-methylene-5,6,7,8-tetrahydrofolate + NADP(+) = (6R)-5,10-methenyltetrahydrofolate + NADPH. It carries out the reaction (6R)-5,10-methenyltetrahydrofolate + H2O = (6R)-10-formyltetrahydrofolate + H(+). It participates in one-carbon metabolism; tetrahydrofolate interconversion. Functionally, catalyzes the oxidation of 5,10-methylenetetrahydrofolate to 5,10-methenyltetrahydrofolate and then the hydrolysis of 5,10-methenyltetrahydrofolate to 10-formyltetrahydrofolate. This Mycoplasma capricolum subsp. capricolum (strain California kid / ATCC 27343 / NCTC 10154) protein is Bifunctional protein FolD.